We begin with the raw amino-acid sequence, 432 residues long: Glutamyl-tRNA reductase (432 aa).

Substrate-binding positions include 55–58 (TCNR), serine 114, 119–121 (ETQ), and glutamine 125. Cysteine 56 (nucleophile) is an active-site residue. Position 194–199 (194–199 (GAGEMI)) interacts with NADP(+).

Belongs to the glutamyl-tRNA reductase family. Homodimer.

The enzyme catalyses (S)-4-amino-5-oxopentanoate + tRNA(Glu) + NADP(+) = L-glutamyl-tRNA(Glu) + NADPH + H(+). Its pathway is porphyrin-containing compound metabolism; protoporphyrin-IX biosynthesis; 5-aminolevulinate from L-glutamyl-tRNA(Glu): step 1/2. Functionally, catalyzes the NADPH-dependent reduction of glutamyl-tRNA(Glu) to glutamate 1-semialdehyde (GSA). The polypeptide is Glutamyl-tRNA reductase (Burkholderia pseudomallei (strain 1710b)).